Here is a 289-residue protein sequence, read N- to C-terminus: 2-hydroxy-6-oxononadienedioate/2-hydroxy-6-oxononatrienedioate hydrolase (289 aa).

Residues 39-275 (TVVMLHGSGP…RCGHWAQWEH (237 aa)) enclose the AB hydrolase-1 domain. The active-site Proton acceptor is the His-269.

The protein belongs to the AB hydrolase superfamily. MhpC family. Homodimer.

It carries out the reaction (2Z,4E)-2-hydroxy-6-oxonona-2,4-dienedioate + H2O = (2Z)-2-hydroxypenta-2,4-dienoate + succinate + H(+). It catalyses the reaction (2Z,4E,7E)-2-hydroxy-6-oxonona-2,4,7-trienedioate + H2O = (2Z)-2-hydroxypenta-2,4-dienoate + fumarate + H(+). The protein operates within aromatic compound metabolism; 3-phenylpropanoate degradation. Catalyzes the cleavage of the C5-C6 bond of 2-hydroxy-6-oxononadienedioate and 2-hydroxy-6-oxononatrienedioate, a dienol ring fission product of the bacterial meta-cleavage pathway for degradation of phenylpropionic acid. The protein is 2-hydroxy-6-oxononadienedioate/2-hydroxy-6-oxononatrienedioate hydrolase of Paraburkholderia xenovorans (strain LB400).